A 391-amino-acid polypeptide reads, in one-letter code: uncharacterized protein (391 aa).

A helical transmembrane segment spans residues 4-24 (FALIVGIVALAIFSFLYIQLY).

Its subcellular location is the membrane. This is an uncharacterized protein from Haemophilus influenzae (strain ATCC 51907 / DSM 11121 / KW20 / Rd).